Here is a 207-residue protein sequence, read N- to C-terminus: MKFKDKLKFYVITDSNYSDEVISVEESLKGGATSIQLRMKTSSTRKMIEVGNKLRKLTSEYDALFFVNDRLDVAQAVNADGIHVGIDDMPVSKIKEIAPNLIIGASAYNLDEMKTAESEGADYLGVGAVYSTNTKLDARDLGINGLKNISKIANLPIVAIGGINHSNVENVLKCGVSGVAVVSAIVGAENILKSAENMNELIKKYIK.

Residues 36–40 (QLRMK) and N68 contribute to the 4-amino-2-methyl-5-(diphosphooxymethyl)pyrimidine site. Positions 69 and 88 each coordinate Mg(2+). A 4-amino-2-methyl-5-(diphosphooxymethyl)pyrimidine-binding site is contributed by S106. 132–134 (TNT) lines the 2-[(2R,5Z)-2-carboxy-4-methylthiazol-5(2H)-ylidene]ethyl phosphate pocket. Position 135 (K135) interacts with 4-amino-2-methyl-5-(diphosphooxymethyl)pyrimidine. 2-[(2R,5Z)-2-carboxy-4-methylthiazol-5(2H)-ylidene]ethyl phosphate is bound by residues G162 and 182-183 (VS).

This sequence belongs to the thiamine-phosphate synthase family. Mg(2+) is required as a cofactor.

The enzyme catalyses 2-[(2R,5Z)-2-carboxy-4-methylthiazol-5(2H)-ylidene]ethyl phosphate + 4-amino-2-methyl-5-(diphosphooxymethyl)pyrimidine + 2 H(+) = thiamine phosphate + CO2 + diphosphate. The catalysed reaction is 2-(2-carboxy-4-methylthiazol-5-yl)ethyl phosphate + 4-amino-2-methyl-5-(diphosphooxymethyl)pyrimidine + 2 H(+) = thiamine phosphate + CO2 + diphosphate. It carries out the reaction 4-methyl-5-(2-phosphooxyethyl)-thiazole + 4-amino-2-methyl-5-(diphosphooxymethyl)pyrimidine + H(+) = thiamine phosphate + diphosphate. It participates in cofactor biosynthesis; thiamine diphosphate biosynthesis; thiamine phosphate from 4-amino-2-methyl-5-diphosphomethylpyrimidine and 4-methyl-5-(2-phosphoethyl)-thiazole: step 1/1. Functionally, condenses 4-methyl-5-(beta-hydroxyethyl)thiazole monophosphate (THZ-P) and 2-methyl-4-amino-5-hydroxymethyl pyrimidine pyrophosphate (HMP-PP) to form thiamine monophosphate (TMP). This chain is Thiamine-phosphate synthase, found in Methanococcus maripaludis (strain DSM 14266 / JCM 13030 / NBRC 101832 / S2 / LL).